We begin with the raw amino-acid sequence, 329 residues long: L-threonine dehydratase catabolic TdcB (329 aa).

53 to 54 (RT) is a binding site for AMP. At lysine 58 the chain carries N6-(pyridoxal phosphate)lysine. AMP is bound by residues glutamine 88, 119–120 (DY), and asparagine 314.

This sequence belongs to the serine/threonine dehydratase family. In the native structure, TdcB is in a dimeric form, whereas in the TdcB-AMP complex, it exists in a tetrameric form (dimer of dimers). Pyridoxal 5'-phosphate serves as cofactor.

It carries out the reaction L-threonine = 2-oxobutanoate + NH4(+). The catalysed reaction is L-serine = pyruvate + NH4(+). Its pathway is amino-acid degradation; L-threonine degradation via propanoate pathway; propanoate from L-threonine: step 1/4. Its activity is regulated as follows. Each protein molecule can bind up to four molecules of AMP, which act as an allosteric activator to the enzyme. Its function is as follows. Catalyzes the anaerobic formation of alpha-ketobutyrate and ammonia from threonine in a two-step reaction. The first step involved a dehydration of threonine and a production of enamine intermediates (aminocrotonate), which tautomerizes to its imine form (iminobutyrate). Both intermediates are unstable and short-lived. The second step is the nonenzymatic hydrolysis of the enamine/imine intermediates to form 2-ketobutyrate and free ammonia. In the low water environment of the cell, the second step is accelerated by RidA. TdcB also dehydrates serine to yield pyruvate via analogous enamine/imine intermediates. The chain is L-threonine dehydratase catabolic TdcB (tdcB) from Escherichia coli O157:H7.